The sequence spans 926 residues: Isoleucine--tRNA ligase (926 aa).

A 'HIGH' region motif is present at residues 57–67; the sequence is PYANGNIHMGH. An L-isoleucyl-5'-AMP-binding site is contributed by E555. A 'KMSKS' region motif is present at residues 596–600; the sequence is KMSKS. Residue K599 participates in ATP binding. C897, C900, C914, and C917 together coordinate Zn(2+).

It belongs to the class-I aminoacyl-tRNA synthetase family. IleS type 1 subfamily. Monomer. It depends on Zn(2+) as a cofactor.

It is found in the cytoplasm. It carries out the reaction tRNA(Ile) + L-isoleucine + ATP = L-isoleucyl-tRNA(Ile) + AMP + diphosphate. Its function is as follows. Catalyzes the attachment of isoleucine to tRNA(Ile). As IleRS can inadvertently accommodate and process structurally similar amino acids such as valine, to avoid such errors it has two additional distinct tRNA(Ile)-dependent editing activities. One activity is designated as 'pretransfer' editing and involves the hydrolysis of activated Val-AMP. The other activity is designated 'posttransfer' editing and involves deacylation of mischarged Val-tRNA(Ile). The sequence is that of Isoleucine--tRNA ligase from Natranaerobius thermophilus (strain ATCC BAA-1301 / DSM 18059 / JW/NM-WN-LF).